The chain runs to 147 residues: Large ribosomal subunit protein uL15 (147 aa).

Residues Met1–Leu57 form a disordered region. Over residues Lys10 to Ala20 the composition is skewed to basic residues.

Belongs to the universal ribosomal protein uL15 family. In terms of assembly, part of the 50S ribosomal subunit.

Its function is as follows. Binds to the 23S rRNA. This is Large ribosomal subunit protein uL15 from Nostoc punctiforme (strain ATCC 29133 / PCC 73102).